The primary structure comprises 220 residues: Protein ABA DEFICIENT 4, chloroplastic (220 aa).

The transit peptide at 1 to 37 (MGFSSFISQPLSSSLSVMKRNVSAKRSELCLDSSKIR) directs the protein to the chloroplast. The next 4 helical transmembrane spans lie at 77-97 (IASSVFAVGTTAVLPFYTLMV), 112-132 (SVPYIILGVLYVYLLYISWTP), 154-174 (MFSSEMTLASAWIHLLVVDLF), and 195-215 (SLCLLFCPVGIVSHFVTKAII).

Expressed in root vasculature, root hairs, leaves, trichomes, sepals, stamens, stigma, pedicels, siliques and embryo.

It localises to the plastid. The protein resides in the chloroplast membrane. Its function is as follows. Required for neoxanthin biosynthesis, an intermediary step in abscisic acid (ABA) biosynthesis. Probably not involved directly in the enzymatic conversion of violaxanthin to neoxanthin. Cannot convert violaxanthin to neoxanthin in vitro. Required for ABA biosynthesis in response to drought stress. Required for neoxanthin biosynthesis which is involved in photoprotection of photosystem II (PSII). Neoxanthin acts as an antioxidant within the photosystem PSII supercomplex. This Arabidopsis thaliana (Mouse-ear cress) protein is Protein ABA DEFICIENT 4, chloroplastic.